We begin with the raw amino-acid sequence, 402 residues long: Phosphoglycerate kinase (402 aa).

Substrate is bound by residues 21 to 23, arginine 36, 59 to 62, arginine 119, and arginine 154; these read DFN and HLGR. Residues lysine 207, glycine 298, glutamate 329, and 356–359 each bind ATP; that span reads GGDA.

The protein belongs to the phosphoglycerate kinase family. As to quaternary structure, monomer.

It localises to the cytoplasm. The catalysed reaction is (2R)-3-phosphoglycerate + ATP = (2R)-3-phospho-glyceroyl phosphate + ADP. The protein operates within carbohydrate degradation; glycolysis; pyruvate from D-glyceraldehyde 3-phosphate: step 2/5. This chain is Phosphoglycerate kinase (pgk), found in Chlamydia pneumoniae (Chlamydophila pneumoniae).